The chain runs to 440 residues: Suppressor of cytokine signaling 4 (440 aa).

A compositionally biased stretch (polar residues) spans 1-10 (MAENNENISK). The interval 1 to 29 (MAENNENISKNVDVRPKTSRSRSADRKDG) is disordered. The span at 12–29 (VDVRPKTSRSRSADRKDG) shows a compositional bias: basic and acidic residues. Residues 286-381 (CYWGVMDKYA…FFEPLLSTPL (96 aa)) form the SH2 domain. The SOCS box domain maps to 376 to 425 (LLSTPLIRTFPFSLQHICRTVICNCTTYDGIDALPIPSSMKLYLKEYHYK).

It participates in protein modification; protein ubiquitination. Its function is as follows. SOCS family proteins form part of a classical negative feedback system that regulates cytokine signal transduction. Substrate-recognition component of a SCF-like ECS (Elongin BC-CUL2/5-SOCS-box protein) E3 ubiquitin-protein ligase complex which mediates the ubiquitination and subsequent proteasomal degradation of target proteins. Inhibits EGF signaling by mediating the degradation of the Tyr-phosphorylated EGF receptor/EGFR. This chain is Suppressor of cytokine signaling 4 (SOCS4), found in Homo sapiens (Human).